The chain runs to 414 residues: 3-phosphoshikimate 1-carboxyvinyltransferase (414 aa).

Residues K20, S21, and R25 each contribute to the 3-phosphoshikimate site. K20 provides a ligand contact to phosphoenolpyruvate. G88 and R116 together coordinate phosphoenolpyruvate. The 3-phosphoshikimate site is built by T157, S158, Q159, S183, D297, and K324. Q159 contacts phosphoenolpyruvate. The active-site Proton acceptor is the D297. R328, R369, and K395 together coordinate phosphoenolpyruvate.

The protein belongs to the EPSP synthase family. In terms of assembly, monomer.

The protein resides in the cytoplasm. The catalysed reaction is 3-phosphoshikimate + phosphoenolpyruvate = 5-O-(1-carboxyvinyl)-3-phosphoshikimate + phosphate. It functions in the pathway metabolic intermediate biosynthesis; chorismate biosynthesis. In terms of biological role, catalyzes the transfer of the enolpyruvyl moiety of phosphoenolpyruvate (PEP) to the 5-hydroxyl of shikimate-3-phosphate (S3P) to produce enolpyruvyl shikimate-3-phosphate and inorganic phosphate. This is 3-phosphoshikimate 1-carboxyvinyltransferase from Caldivirga maquilingensis (strain ATCC 700844 / DSM 13496 / JCM 10307 / IC-167).